The primary structure comprises 688 residues: Probable xyloglucan glycosyltransferase 7 (688 aa).

The segment at 1–25 (MAPSWWGRSGGGGVGNGGGTPVVVK) is disordered. Gly residues predominate over residues 8–20 (RSGGGGVGNGGGT). The next 2 helical transmembrane spans lie at 121 to 141 (VSLV…LQGW) and 183 to 203 (VALF…CFWI). Residue Asp-269 is part of the active site. The substrate site is built by Asp-328 and Asp-330. Asp-422 is an active-site residue. The next 2 helical transmembrane spans lie at 500–520 (LILP…TMFV) and 525–545 (LPAW…ILPA). The disordered stretch occupies residues 604–635 (HSKQQRVGSAPNLDALTKEESNPKKDSKKKKH). Over residues 619–628 (LTKEESNPKK) the composition is skewed to basic and acidic residues. A run of 2 helical transmembrane segments spans residues 638 to 657 (IYRK…ARSL) and 663 to 683 (IHFY…LDLI).

Belongs to the glycosyltransferase 2 family. Plant cellulose synthase-like C subfamily.

It localises to the golgi apparatus membrane. Its function is as follows. Probable beta-1,4-glucan synthase rather involved in the synthesis of the xyloglucan backbone than cellulose. Seems to work simultaneously with xyloglucan 6-xylosyltransferase. Xyloglucan is a noncellulosic polysaccharides of plant cell wall and consists of a glucan backbone substituted by xylose, galactose and fucose. The chain is Probable xyloglucan glycosyltransferase 7 (CSLC7) from Oryza sativa subsp. japonica (Rice).